A 156-amino-acid chain; its full sequence is Endogenous retrovirus group K member 25 Pro protein (156 aa).

The Peptidase A2 domain maps to 21–96; that stretch reads FEGLVDTGAD…IPLNLWGRDL (76 aa). Asp-26 is an active-site residue. In terms of domain architecture, G-patch spans 111–156; that stretch reads YSPTSQKIMTKMGYIPGKGLGKNEDGIKIPVEAKINQKREGIGYPF.

This sequence belongs to the peptidase A2 family. HERV class-II K(HML-2) subfamily. In terms of assembly, active as a homodimer. In terms of processing, autoproteolytically processed at the N-terminus. Expected C-terminal autoprocessing not detected. The sequence shown is that of the processed Pro protein.

The enzyme catalyses Processing at the authentic HIV-1 PR recognition site and release of the mature p17 matrix and the p24 capsid protein, as a result of the cleavage of the -SQNY-|-PIVQ- cleavage site.. Retroviral proteases have roles in processing of the primary translation products and the maturation of the viral particle. Endogenous Pro proteins may have kept, lost or modified their original function during evolution. This endogenous protein has retained most of the characteristics of retroviral proteases. In Homo sapiens (Human), this protein is Endogenous retrovirus group K member 25 Pro protein (ERVK-25).